The primary structure comprises 155 residues: Putative pre-16S rRNA nuclease (155 aa).

This sequence belongs to the YqgF nuclease family.

The protein resides in the cytoplasm. Functionally, could be a nuclease involved in processing of the 5'-end of pre-16S rRNA. The chain is Putative pre-16S rRNA nuclease from Corynebacterium jeikeium (strain K411).